The primary structure comprises 156 residues: MNINATLIGQAIWFALFIWITMKYVWPPLQKAMADRQAQIAEGLAAAERGKHEQELAAKRSADALREAKEKSADFVAQAEKRAQQIVEEAKGTAKIEADKVVAGAKAEIEQEVERAKQQLRERVAELAVAGAEKILRKEINASAHADMLAALKQDL.

A helical membrane pass occupies residues 7 to 26 (LIGQAIWFALFIWITMKYVW).

The protein belongs to the ATPase B chain family. As to quaternary structure, F-type ATPases have 2 components, F(1) - the catalytic core - and F(0) - the membrane proton channel. F(1) has five subunits: alpha(3), beta(3), gamma(1), delta(1), epsilon(1). F(0) has three main subunits: a(1), b(2) and c(10-14). The alpha and beta chains form an alternating ring which encloses part of the gamma chain. F(1) is attached to F(0) by a central stalk formed by the gamma and epsilon chains, while a peripheral stalk is formed by the delta and b chains.

The protein resides in the cell inner membrane. Functionally, f(1)F(0) ATP synthase produces ATP from ADP in the presence of a proton or sodium gradient. F-type ATPases consist of two structural domains, F(1) containing the extramembraneous catalytic core and F(0) containing the membrane proton channel, linked together by a central stalk and a peripheral stalk. During catalysis, ATP synthesis in the catalytic domain of F(1) is coupled via a rotary mechanism of the central stalk subunits to proton translocation. In terms of biological role, component of the F(0) channel, it forms part of the peripheral stalk, linking F(1) to F(0). The chain is ATP synthase subunit b from Dechloromonas aromatica (strain RCB).